The primary structure comprises 607 residues: Isocitrate dehydrogenase kinase/phosphatase (607 aa).

ATP is bound by residues 328–334 (APGIKGL) and lysine 349. Aspartate 384 is an active-site residue.

It belongs to the AceK family.

The protein localises to the cytoplasm. It catalyses the reaction L-seryl-[isocitrate dehydrogenase] + ATP = O-phospho-L-seryl-[isocitrate dehydrogenase] + ADP + H(+). In terms of biological role, bifunctional enzyme which can phosphorylate or dephosphorylate isocitrate dehydrogenase (IDH) on a specific serine residue. This is a regulatory mechanism which enables bacteria to bypass the Krebs cycle via the glyoxylate shunt in response to the source of carbon. When bacteria are grown on glucose, IDH is fully active and unphosphorylated, but when grown on acetate or ethanol, the activity of IDH declines drastically concomitant with its phosphorylation. In Cupriavidus metallidurans (strain ATCC 43123 / DSM 2839 / NBRC 102507 / CH34) (Ralstonia metallidurans), this protein is Isocitrate dehydrogenase kinase/phosphatase.